The sequence spans 284 residues: 4-hydroxybenzoate octaprenyltransferase (284 aa).

Transmembrane regions (helical) follow at residues 16–36 (PIGILLLLWPTLWALWMASDG), 40–60 (WTLVAIFTLGTVLMRSAGCAV), 91–111 (LLVALVLTLLAFALIWPLNTL), 132–152 (FFAIPQAYLGIAFGFGIPMGF), 157–177 (NTVPAAAWWLLVANVFWSVAY), 207–227 (AIIMFCYAMTLGIIGIVGWQF), 231–251 (IWFVAGLLLAAVCAAYHYTLI), and 259–279 (CFAAFNHNNWLGGAIFGGVAL).

Belongs to the UbiA prenyltransferase family. Mg(2+) is required as a cofactor.

It localises to the cell inner membrane. It carries out the reaction all-trans-octaprenyl diphosphate + 4-hydroxybenzoate = 4-hydroxy-3-(all-trans-octaprenyl)benzoate + diphosphate. The protein operates within cofactor biosynthesis; ubiquinone biosynthesis. In terms of biological role, catalyzes the prenylation of para-hydroxybenzoate (PHB) with an all-trans polyprenyl group. Mediates the second step in the final reaction sequence of ubiquinone-8 (UQ-8) biosynthesis, which is the condensation of the polyisoprenoid side chain with PHB, generating the first membrane-bound Q intermediate 3-octaprenyl-4-hydroxybenzoate. The chain is 4-hydroxybenzoate octaprenyltransferase from Janthinobacterium sp. (strain Marseille) (Minibacterium massiliensis).